Consider the following 451-residue polypeptide: Signal transduction histidine-protein kinase ArlS (451 aa).

The next 2 membrane-spanning stretches (helical) occupy residues 11 to 31 (IIVT…IIIF) and 156 to 176 (IIAL…SYVF). In terms of domain architecture, HAMP spans 178 to 231 (TQITKPLVSLSNKMIEIRRDGFQNKLQLNTNYEEIDNLANTFNEMMSQIEESFN). The Histidine kinase domain maps to 239–451 (DASHELRTPL…NKGTTFKIIF (213 aa)). At H242 the chain carries Phosphohistidine; by autocatalysis.

In terms of processing, autophosphorylated.

It localises to the cell membrane. It catalyses the reaction ATP + protein L-histidine = ADP + protein N-phospho-L-histidine.. Its function is as follows. Member of the two-component regulatory system ArlS/ArlR involved in the regulation of adhesion, autolysis, multidrug resistance and virulence. ArlS probably functions as a sensor protein kinase which is autophosphorylated at a histidine residue and transfers its phosphate group to ArlR. The chain is Signal transduction histidine-protein kinase ArlS (arlS) from Staphylococcus aureus (strain MRSA252).